Consider the following 124-residue polypeptide: Protein YebF (124 aa).

Positions 1 to 27 are cleaved as a signal peptide; that stretch reads MKTCHIINRVGLSGVALLLTVSFTVSA. The YebF/Cmi domain occupies 36–123; sequence KFISCDNLTK…QQNTISYSEL (88 aa). An intrachain disulfide couples Cys40 to Cys113.

It belongs to the YebF family.

The protein localises to the secreted. The polypeptide is Protein YebF (Photorhabdus laumondii subsp. laumondii (strain DSM 15139 / CIP 105565 / TT01) (Photorhabdus luminescens subsp. laumondii)).